A 729-amino-acid chain; its full sequence is 1,4-alpha-glucan branching enzyme GlgB (729 aa).

Residue Asp-408 is the Nucleophile of the active site. Glu-461 functions as the Proton donor in the catalytic mechanism.

Belongs to the glycosyl hydrolase 13 family. GlgB subfamily. Monomer.

The catalysed reaction is Transfers a segment of a (1-&gt;4)-alpha-D-glucan chain to a primary hydroxy group in a similar glucan chain.. Its pathway is glycan biosynthesis; glycogen biosynthesis. Functionally, catalyzes the formation of the alpha-1,6-glucosidic linkages in glycogen by scission of a 1,4-alpha-linked oligosaccharide from growing alpha-1,4-glucan chains and the subsequent attachment of the oligosaccharide to the alpha-1,6 position. The chain is 1,4-alpha-glucan branching enzyme GlgB from Vibrio cholerae serotype O1 (strain ATCC 39315 / El Tor Inaba N16961).